The following is a 727-amino-acid chain: FACT complex subunit Ssrp1 (727 aa).

2 disordered regions span residues 458-565 (AEAR…AFML) and 596-727 (ELKD…EGSD). Composition is skewed to acidic residues over residues 464–479 (EEEDDDGDDSDEESTD) and 487–508 (NESDVAEEYDSNVEDDSDDDSD). Residues 510 to 519 (SGGGGDGGTD) are compositionally biased toward gly residues. Composition is skewed to basic and acidic residues over residues 529-555 (KKNEKKEKTHKEKEKIKKPTKKKDTGK), 596-620 (ELKDKSKWEEAANKDKIRYQEEMRN), and 675-703 (DQEKVKEIPKKKNKSTAEDKDKNSKKSES). Positions 556-622 (PKRGTSAFML…RYQEEMRNYK (67 aa)) form a DNA-binding region, HMG box. The segment covering 704–727 (EGGDSDDASNASEDDDEEEDEGSD) has biased composition (acidic residues).

Belongs to the SSRP1 family. As to quaternary structure, component of the FACT complex, a stable heterodimer of dre4/spt16 and Ssrp.

Its subcellular location is the nucleus. It is found in the chromosome. It localises to the nucleolus. Component of the FACT complex, a general chromatin factor that acts to reorganize nucleosomes. The FACT complex is involved in multiple processes that require DNA as a template such as mRNA elongation, DNA replication and DNA repair. During transcription elongation the FACT complex acts as a histone chaperone that both destabilizes and restores nucleosomal structure. It facilitates the passage of RNA polymerase II and transcription by promoting the dissociation of one histone H2A-H2B dimer from the nucleosome, then subsequently promotes the reestablishment of the nucleosome following the passage of RNA polymerase II. Binds specifically to single-stranded DNA and RNA with highest affinity for nucleotides G and U. The FACT complex is required for expression of Hox genes. The chain is FACT complex subunit Ssrp1 (Ssrp) from Drosophila pseudoobscura pseudoobscura (Fruit fly).